A 398-amino-acid chain; its full sequence is Dual-specificity RNA methyltransferase RlmN (398 aa).

Glutamate 119 serves as the catalytic Proton acceptor. A Radical SAM core domain is found at 125-364; the sequence is EEERATLCVS…TIVRKTRGDD (240 aa). Cysteines 132 and 369 form a disulfide. [4Fe-4S] cluster contacts are provided by cysteine 139, cysteine 143, and cysteine 146. Residues 193–194, serine 225, 247–249, and asparagine 326 each bind S-adenosyl-L-methionine; these read GE and SLH. Catalysis depends on cysteine 369, which acts as the S-methylcysteine intermediate.

This sequence belongs to the radical SAM superfamily. RlmN family. Requires [4Fe-4S] cluster as cofactor.

It is found in the cytoplasm. It catalyses the reaction adenosine(2503) in 23S rRNA + 2 reduced [2Fe-2S]-[ferredoxin] + 2 S-adenosyl-L-methionine = 2-methyladenosine(2503) in 23S rRNA + 5'-deoxyadenosine + L-methionine + 2 oxidized [2Fe-2S]-[ferredoxin] + S-adenosyl-L-homocysteine. It carries out the reaction adenosine(37) in tRNA + 2 reduced [2Fe-2S]-[ferredoxin] + 2 S-adenosyl-L-methionine = 2-methyladenosine(37) in tRNA + 5'-deoxyadenosine + L-methionine + 2 oxidized [2Fe-2S]-[ferredoxin] + S-adenosyl-L-homocysteine. In terms of biological role, specifically methylates position 2 of adenine 2503 in 23S rRNA and position 2 of adenine 37 in tRNAs. m2A2503 modification seems to play a crucial role in the proofreading step occurring at the peptidyl transferase center and thus would serve to optimize ribosomal fidelity. This is Dual-specificity RNA methyltransferase RlmN from Pectobacterium atrosepticum (strain SCRI 1043 / ATCC BAA-672) (Erwinia carotovora subsp. atroseptica).